We begin with the raw amino-acid sequence, 973 residues long: Piwi-like protein 2 (973 aa).

The disordered stretch occupies residues 28–65 (WPQASKPLDPALGRGAPAGRGHVFGKPEEPSTQRGPAQ). The segment covering 34–48 (PLDPALGRGAPAGRG) has biased composition (low complexity). The residue at position 47 (R47) is a Symmetric dimethylarginine. R76 and R97 each carry omega-N-methylarginine; by PRMT5; alternate. A Symmetric dimethylarginine; by PRMT5; alternate modification is found at R76. Symmetric dimethylarginine; alternate is present on R97. Residue R102 is modified to Symmetric dimethylarginine; by PRMT5; alternate. Position 102 is an omega-N-methylarginine; alternate (R102). A symmetric dimethylarginine mark is found at R146 and R158. A disordered region spans residues 162 to 199 (GISREVDKPPCTFSTPSRGPPQLSSPPALPQSPLHSPD). R165 is subject to Symmetric dimethylarginine; by PRMT5. A PAZ domain is found at 389-502 (CVLDVMHAIY…LLPELSFMTG (114 aa)). R551 carries the post-translational modification Symmetric dimethylarginine; by PRMT5. Residues 668 to 959 (MVVCIIMGPR…LAFLSGHILH (292 aa)) enclose the Piwi domain. Residues D745, E783, D815, and H948 contribute to the active site.

The protein belongs to the argonaute family. Piwi subfamily. In terms of assembly, interacts with DDX4, MAEL, EIF3A, EIF4E, EIF4G, PRMT5 and WDR77. Associates with EIF4E- and EIF4G-containing m7G cap-binding complexes. Interacts (when methylated on arginine residues) with TDRD1 and TDRKH/TDRD2. Interacts with TDRD12. Component of the PET complex, at least composed of EXD1, PIWIL2, TDRD12 and piRNAs. Interacts with MOV10L1. Interacts with GPAT2. Interacts with TEX19. Interacts with GSK3B. Interacts (via PIWI domain) with BMAL1 and CLOCK. Interacts with TEX15. Requires Mg(2+) as cofactor. Post-translationally, arginine methylation by PRMT5 is required for the interaction with Tudor domain-containing protein TDRD1 and subsequent localization to the meiotic nuage, also named P granule. As to expression, expressed in adult testis and in most tumors.

Its subcellular location is the cytoplasm. Its function is as follows. Endoribonuclease that plays a central role during spermatogenesis by repressing transposable elements and preventing their mobilization, which is essential for the germline integrity. Plays an essential role in meiotic differentiation of spermatocytes, germ cell differentiation and in self-renewal of spermatogonial stem cells. Acts via the piRNA metabolic process, which mediates the repression of transposable elements during meiosis by forming complexes composed of piRNAs and Piwi proteins and govern the methylation and subsequent repression of transposons. During piRNA biosynthesis, plays a key role in the piRNA amplification loop, also named ping-pong amplification cycle, by acting as a 'slicer-competent' piRNA endoribonuclease that cleaves primary piRNAs, which are then loaded onto 'slicer-incompetent' PIWIL4. PIWIL2 slicing produces a pre-miRNA intermediate, which is then processed in mature piRNAs, and as well as a 16 nucleotide by-product that is degraded. Required for PIWIL4/MIWI2 nuclear localization and association with secondary piRNAs antisense. Besides their function in transposable elements repression, piRNAs are probably involved in other processes during meiosis such as translation regulation. Indirectly modulates expression of genes such as PDGFRB, SLC2A1, ITGA6, GJA7, THY1, CD9 and STRA8. When overexpressed, acts as an oncogene by inhibition of apoptosis and promotion of proliferation in tumors. Represses circadian rhythms by promoting the stability and activity of core clock components BMAL1 and CLOCK by inhibiting GSK3B-mediated phosphorylation and ubiquitination-dependent degradation of these proteins. This is Piwi-like protein 2 (PIWIL2) from Homo sapiens (Human).